The following is a 650-amino-acid chain: MGKIIGIDLGTTNSCVAIMEGNQVKVIENSEGARTTPSIIAYMDDNEVLVGAPAKRQSVTNPKNTLFAVKRLIGRRFEEKEVQKDIGLMPYAIIKADNGDAWVEAHGEKLAPPQISAEVLRKMKKTAEDYLGEPVTEAVITVPAYFNDSQRQATKDAGRIAGLEVKRIINEPTAAALAFGLDKAEKGDRKIAVYDLGGGTFDVSIIEIADVDGEMQFEVLSTNGDTFLGGEDFDQRIIDYIIGEFKKEQGVDLSKDVLALQRLKEAAEKAKIELSSSQQTEINLPYITADASGPKHLNLKITRAKLEALVEDLVERTIEPCRIAIKDAGVKVSDIDDVILVGGQTRMPKVQEKVKEFFGKEPRRDVNPDEAVAVGAAIQGQVLSGDRKDVLLLDVTPLSLGIETLGGVMTKMITKNTTIPTKHSQVYSTADDNQSAVTIKVFQGEREMAAGNKLLGEFNLEGIPPAPRGVPQIEVTFDIDANGILHVGAKDKATGKENKITIKANSGLSDAEIDQMIKDAEANAAEDHKLRELADSRNQGDALVHSTKKALTEYGDKLDAGEKEKIEAALKSLEDVLKDTSADKAAIDAKVEELGKASQKLGEKMYADMQAQQAGAAGAAGAAEGAAHAGGAQQAADDVVDAEFKEVKKD.

Threonine 200 carries the post-translational modification Phosphothreonine; by autocatalysis. The interval glutamine 613–glutamine 634 is disordered.

This sequence belongs to the heat shock protein 70 family.

Its function is as follows. Acts as a chaperone. This chain is Chaperone protein DnaK, found in Burkholderia vietnamiensis (strain G4 / LMG 22486) (Burkholderia cepacia (strain R1808)).